Consider the following 180-residue polypeptide: uncharacterized protein (180 aa).

It localises to the mitochondrion. This is an uncharacterized protein from Marchantia polymorpha (Common liverwort).